Here is a 350-residue protein sequence, read N- to C-terminus: Histidinol-phosphate aminotransferase (350 aa).

Residue Lys209 is modified to N6-(pyridoxal phosphate)lysine.

Belongs to the class-II pyridoxal-phosphate-dependent aminotransferase family. Histidinol-phosphate aminotransferase subfamily. Homodimer. Requires pyridoxal 5'-phosphate as cofactor.

It catalyses the reaction L-histidinol phosphate + 2-oxoglutarate = 3-(imidazol-4-yl)-2-oxopropyl phosphate + L-glutamate. It functions in the pathway amino-acid biosynthesis; L-histidine biosynthesis; L-histidine from 5-phospho-alpha-D-ribose 1-diphosphate: step 7/9. The protein is Histidinol-phosphate aminotransferase of Christiangramia forsetii (strain DSM 17595 / CGMCC 1.15422 / KT0803) (Gramella forsetii).